We begin with the raw amino-acid sequence, 526 residues long: Variant surface glycoprotein MITAT 1.4A (526 aa).

An N-terminal signal peptide occupies residues 1–33 (MDCHTKETLGVTQWRRSTMLTLSLLYAITPADG). Cystine bridges form between Cys47–Cys173 and Cys154–Cys215. Residues 157-193 (NEGGDGDGKDQLAPKGCRHGTEADFDAGAGPAESEVA) are disordered. The N-linked (GlcNAc...) asparagine glycan is linked to Asn453. The GPI-anchor amidated aspartate moiety is linked to residue Asp503. A propeptide spans 504–526 (SSILVTKKFALTVVSAAFVALLF) (removed in mature form).

Its subcellular location is the cell membrane. VSG forms a coat on the surface of the parasite. The trypanosome evades the immune response of the host by expressing a series of antigenically distinct VSGs from an estimated 1000 VSG genes. The sequence is that of Variant surface glycoprotein MITAT 1.4A from Trypanosoma brucei brucei.